We begin with the raw amino-acid sequence, 608 residues long: Coilin (608 aa).

Positions 134–272 (KETGGYESES…RKKAKRQWLR (139 aa)) are disordered. The segment covering 141–155 (SESEEDELEEEAEEF) has biased composition (acidic residues). The segment covering 161-179 (ASKKRKTSSKNQSTKRKKC) has biased composition (basic residues). The Nuclear localization signal 1 signature appears at 163–170 (KKRKTSSK). Position 187 is a phosphoserine (Ser187). Positions 211 to 228 (DVQSANNDEQNNDSTKPM) are enriched in polar residues. Residues 235-245 (SQQEESKEHND) are compositionally biased toward basic and acidic residues. The short motif at 253–260 (TKKTPSRS) is the Nuclear localization signal 2 element. Residues 256 to 269 (TPSRSARRKKAKRQ) are compositionally biased toward basic residues. In terms of domain architecture, Tudor; atypical spans 410-510 (YEQLVAYTGS…LLDVRSVKTS (101 aa)). Residues 513–585 (DSAEVAKSAL…KKGSSSGGSW (73 aa)) are disordered. The span at 558–585 (EALSAKKAALSQANNGWNKKGSSSGGSW) shows a compositional bias: low complexity.

Belongs to the coilin family. As to quaternary structure, homooligomer. Interaction with RNA results in multimerization due to structural alteration in the NOD domain.

It localises to the nucleus. The protein resides in the cajal body. In terms of biological role, probable component of nuclear coiled bodies, also known as Cajal bodies or CBs, which are involved in the modification and assembly of nucleoplasmic snRNPs. Required for CBs formation. Binds snRNAs and non-specific artificial RNA via the N-terminal part of the NOD domain and via the NLS2 region (212-282) of the IDD domain. The two sites are able to function independently and provide effective RNA-binding in a non-cooperative manner. This Arabidopsis thaliana (Mouse-ear cress) protein is Coilin.